A 37-amino-acid chain; its full sequence is Large ribosomal subunit protein bL36c (37 aa).

The protein belongs to the bacterial ribosomal protein bL36 family.

It is found in the plastid. The protein localises to the chloroplast. The polypeptide is Large ribosomal subunit protein bL36c (rpl36) (Chlorella vulgaris (Green alga)).